The following is a 167-amino-acid chain: Ribosome-binding factor A (167 aa).

Residues 122 to 167 (LAASAKHAGEADPYKGDSPEDIDEDDFDEEDTDLSGDNDLDEDANR) form a disordered region. The span at 128–139 (HAGEADPYKGDS) shows a compositional bias: basic and acidic residues. The span at 140–167 (PEDIDEDDFDEEDTDLSGDNDLDEDANR) shows a compositional bias: acidic residues.

Belongs to the RbfA family. As to quaternary structure, monomer. Binds 30S ribosomal subunits, but not 50S ribosomal subunits or 70S ribosomes.

The protein resides in the cytoplasm. In terms of biological role, one of several proteins that assist in the late maturation steps of the functional core of the 30S ribosomal subunit. Associates with free 30S ribosomal subunits (but not with 30S subunits that are part of 70S ribosomes or polysomes). Required for efficient processing of 16S rRNA. May interact with the 5'-terminal helix region of 16S rRNA. The polypeptide is Ribosome-binding factor A (Paenarthrobacter aurescens (strain TC1)).